The following is a 172-amino-acid chain: MNLLDYLPGVPDFPKPGVLFRDISPLLANPIAFKEAIHQLNEVAKQFDYTHILGIESRGFIFGSALAHFAHKGLALARKPNKLPLATHREAYGLEYGIDSLEIQQSTLPNDAKILLLDDVLATDGTLIAADKLIRSAGFEVIGAITLLEIGFLNGKQLLEQNGIRHQSVLKS.

The protein belongs to the purine/pyrimidine phosphoribosyltransferase family. As to quaternary structure, homodimer.

The protein localises to the cytoplasm. It catalyses the reaction AMP + diphosphate = 5-phospho-alpha-D-ribose 1-diphosphate + adenine. The protein operates within purine metabolism; AMP biosynthesis via salvage pathway; AMP from adenine: step 1/1. Its function is as follows. Catalyzes a salvage reaction resulting in the formation of AMP, that is energically less costly than de novo synthesis. This Polynucleobacter necessarius subsp. necessarius (strain STIR1) protein is Adenine phosphoribosyltransferase.